The primary structure comprises 168 residues: Ubiquitin-fold modifier-conjugating enzyme 1 (168 aa).

The active-site Glycyl thioester intermediate is C116.

This sequence belongs to the ubiquitin-conjugating enzyme family. UFC1 subfamily.

Functionally, E2-like enzyme which forms an intermediate with UFM1 via a thioester linkage. In Trichoplax adhaerens (Trichoplax reptans), this protein is Ubiquitin-fold modifier-conjugating enzyme 1.